The sequence spans 470 residues: Glutamate--tRNA ligase 2 (470 aa).

The 'HIGH' region motif lies at 10–20 (PSPTGFLHIGS). The short motif at 239 to 243 (KLSKR) is the 'KMSKS' region element. ATP is bound at residue lysine 242.

This sequence belongs to the class-I aminoacyl-tRNA synthetase family. Glutamate--tRNA ligase type 1 subfamily. Monomer.

The protein localises to the cytoplasm. The catalysed reaction is tRNA(Glu) + L-glutamate + ATP = L-glutamyl-tRNA(Glu) + AMP + diphosphate. In terms of biological role, catalyzes the attachment of glutamate to tRNA(Glu) in a two-step reaction: glutamate is first activated by ATP to form Glu-AMP and then transferred to the acceptor end of tRNA(Glu). In Rickettsia prowazekii (strain Madrid E), this protein is Glutamate--tRNA ligase 2.